A 726-amino-acid chain; its full sequence is uncharacterized protein (726 aa).

The region spanning 10-135 is the Thioredoxin domain; the sequence is MRISWVVAFI…LLDFVETHLN (126 aa). Disordered stretches follow at residues 133-153 and 227-280; these read HLNPDTDPDIPSDEDVLTDED and VTSV…NPTG. Acidic residues predominate over residues 138–153; the sequence is TDPDIPSDEDVLTDED. A helical transmembrane segment spans residues 675-695; that stretch reads IRVLYMVLGIVTVGILVWYFS. Phosphoserine is present on Ser708.

It is found in the membrane. This is an uncharacterized protein from Schizosaccharomyces pombe (strain 972 / ATCC 24843) (Fission yeast).